The sequence spans 102 residues: uncharacterized protein (102 aa).

This is an uncharacterized protein from Sulfolobus spindle-shape virus 1 (SSV1).